A 328-amino-acid chain; its full sequence is NAD(P)H-dependent pentose reductase (328 aa).

Tyr50 (proton donor) is an active-site residue. Substrate is bound at residue His112. Residues 174-175 (AN), 223-232 (SSFGPQSFVE), and 279-289 (KSNNVDRLKQN) each bind NAD(+).

This sequence belongs to the aldo/keto reductase family.

In terms of biological role, pentose reductase with a broad substrate affinity involved in pentose catabolism. Has highest reductase activities with L-arabinose and D-xylose as substrates, and displays much lower activities with D-ribose, D-galactose and D-glucose. Has highest dehydrogenase activity with L-arabitol as substrate, followed by xylitol and D-sorbitol. May be responsible for the first step of the L-arabinose catabolic pathway. The chain is NAD(P)H-dependent pentose reductase (PRD1) from Pyricularia oryzae (strain 70-15 / ATCC MYA-4617 / FGSC 8958) (Rice blast fungus).